Consider the following 229-residue polypeptide: Golgi to ER traffic protein 1 (229 aa).

The Lumenal segment spans residues 1–14 (MGILAALDLHPYTL). The helical transmembrane segment at 15 to 34 (VVSSFTVLLIQQLVGFIGKS) threads the bilayer. The Cytoplasmic segment spans residues 35–122 (TIQEFAWLFY…KINSLVGVVL (88 aa)). Positions 60-117 (HTKKQEELHKLNREKRSISAQDEYAKWTKLNRQAEKLTAEVKSLSDDIAKDKSKINSL) form a coiled coil. A helical membrane pass occupies residues 123 to 143 (LFLTTLPLWVFRLWFRKSVLF). Topologically, residues 144–167 (YLPTGVFPYYVERVLAIPFFASGS) are lumenal. A helical transmembrane segment spans residues 168–184 (VGLTVWMFAVNNVISSV). Residues 185 to 229 (LFLLTFPFKPSVPIPIRQTKVEEVVPESAESKESSPEVIDIADAN) lie on the Cytoplasmic side of the membrane. A compositionally biased stretch (basic and acidic residues) spans 210-219 (PESAESKESS). Positions 210-229 (PESAESKESSPEVIDIADAN) are disordered.

It belongs to the WRB/GET1 family. Component of the Golgi to ER traffic (GET) complex, which is composed of GET1, GET2 and GET3. Within the complex, GET1 and GET2 form a heterotetramer which is stabilized by phosphatidylinositol binding and which binds to the GET3 homodimer.

The protein resides in the endoplasmic reticulum membrane. It localises to the golgi apparatus membrane. Its function is as follows. Required for the post-translational delivery of tail-anchored (TA) proteins to the endoplasmic reticulum. Together with GET2, acts as a membrane receptor for soluble GET3, which recognizes and selectively binds the transmembrane domain of TA proteins in the cytosol. The GET complex cooperates with the HDEL receptor ERD2 to mediate the ATP-dependent retrieval of resident ER proteins that contain a C-terminal H-D-E-L retention signal from the Golgi to the ER. The polypeptide is Golgi to ER traffic protein 1 (Scheffersomyces stipitis (strain ATCC 58785 / CBS 6054 / NBRC 10063 / NRRL Y-11545) (Yeast)).